We begin with the raw amino-acid sequence, 407 residues long: Methyltransferase/ribosomally synthesized type I borosin cyclic peptide precursor ceuMA2 (407 aa).

Residues 1–246 (MATTKTGSLT…TTSTLYIPPR (246 aa)) form a methyltransferase domain region. Active-site residues include Arg-70, Tyr-74, and Tyr-96. The S-adenosyl-L-methionine site is built by Tyr-96, His-98, Val-101, Ala-128, Gln-170, Gly-208, Ser-239, and Thr-240. The interval 247–370 (EIAPVDQRIM…GPVYKVMRAT (124 aa)) is clasp domain. A precursor leader region spans residues 371–393 (PAAIAAGQEHSLDEIAGSADSES). 2 positions are modified to N-methylthreonine: Thr-399 and Thr-400. An N-methylisoleucine modification is found at Ile-401. Val-402 and Val-403 each carry N-methylvaline. The residue at position 404 (Ile-404) is an N-methylisoleucine. Val-405 bears the N-methylvaline mark. An N-methylhistidine modification is found at His-406.

It in the N-terminal section; belongs to the precorrin methyltransferase family. Homodimer. Post-translationally, ceuMA2 automethylates at Thr-399, Thr-400, Ile-401, Val-402, Val-403, Ile-404, Val-405 and His-406 before being processed by a prolyloligopeptidase which likely forms a peptidyl ester upon removal of the follower propeptide, which then undergoes macrocyclization with the N-terminus of the modified core peptide. Peptide backbone alpha-N-methylations change the physicochemical properties of amide bonds to provide structural constraints and other favorable characteristics including biological membrane permeability to peptides.

Its pathway is secondary metabolite biosynthesis. In terms of biological role, fusion protein of the methyltransferase ceuM2 and a type I borosin core peptide; part of the gene cluster that mediates the biosynthesis of a type I borosin, a highly methylated cyclic peptide with potent biological activities. Type I borosins derive from the C-terminus of the fusion protein, and it is the same protein that methylates its own C-terminus using S-adenosyl methionine (SAM). The C-terminus is subsequently cleaved off and macrocyclized by a prolyloligopeptidase to give the final product. The sequence is that of Methyltransferase/ribosomally synthesized type I borosin cyclic peptide precursor ceuMA2 from Cerrena unicolor (Canker rot fungus).